Reading from the N-terminus, the 552-residue chain is Phosphoglucomutase (552 aa).

The active-site Phosphoserine intermediate is serine 135. 4 residues coordinate Mg(2+): serine 135, aspartate 289, aspartate 291, and aspartate 293.

Belongs to the phosphohexose mutase family. It depends on Mg(2+) as a cofactor.

The enzyme catalyses alpha-D-glucose 1-phosphate = alpha-D-glucose 6-phosphate. It participates in glycolipid metabolism; diglucosyl-diacylglycerol biosynthesis. In terms of biological role, catalyzes the interconversion between glucose-6-phosphate and alpha-glucose-1-phosphate. This is the first step in the biosynthesis of diglucosyl-diacylglycerol (Glc2-DAG), i.e. a glycolipid found in the membrane, which is also used as a membrane anchor for lipoteichoic acid (LTA). This is Phosphoglucomutase (pgcA) from Staphylococcus saprophyticus subsp. saprophyticus (strain ATCC 15305 / DSM 20229 / NCIMB 8711 / NCTC 7292 / S-41).